Here is a 45-residue protein sequence, read N- to C-terminus: uncharacterized protein (45 aa).

A helical membrane pass occupies residues L10–I27.

It localises to the membrane. This is an uncharacterized protein from Dictyostelium discoideum (Social amoeba).